We begin with the raw amino-acid sequence, 85 residues long: Cell division topological specificity factor (85 aa).

This sequence belongs to the MinE family.

Functionally, prevents the cell division inhibition by proteins MinC and MinD at internal division sites while permitting inhibition at polar sites. This ensures cell division at the proper site by restricting the formation of a division septum at the midpoint of the long axis of the cell. In Xylella fastidiosa (strain M23), this protein is Cell division topological specificity factor.